Consider the following 1193-residue polypeptide: DNA-directed RNA polymerase subunit beta (1193 aa).

Residues 1173–1193 (QQAKEAAELEKAKEEALDKTE) form a disordered region. Residues 1177–1193 (EAAELEKAKEEALDKTE) are compositionally biased toward basic and acidic residues.

This sequence belongs to the RNA polymerase beta chain family. As to quaternary structure, the RNAP catalytic core consists of 2 alpha, 1 beta, 1 beta' and 1 omega subunit. When a sigma factor is associated with the core the holoenzyme is formed, which can initiate transcription.

It catalyses the reaction RNA(n) + a ribonucleoside 5'-triphosphate = RNA(n+1) + diphosphate. DNA-dependent RNA polymerase catalyzes the transcription of DNA into RNA using the four ribonucleoside triphosphates as substrates. The sequence is that of DNA-directed RNA polymerase subunit beta from Streptococcus thermophilus (strain CNRZ 1066).